The chain runs to 590 residues: Arginine--tRNA ligase (590 aa).

The short motif at 138 to 148 (ANPTGPLHIGH) is the 'HIGH' region element.

Belongs to the class-I aminoacyl-tRNA synthetase family. Monomer.

It is found in the cytoplasm. It catalyses the reaction tRNA(Arg) + L-arginine + ATP = L-arginyl-tRNA(Arg) + AMP + diphosphate. The protein is Arginine--tRNA ligase of Orientia tsutsugamushi (strain Boryong) (Rickettsia tsutsugamushi).